The following is a 258-amino-acid chain: Fibroblast growth factor-binding protein 3 (258 aa).

An N-terminal signal peptide occupies residues 1–26 (MTPPKLRASLSPSLLLLLSGCLLAAA). Disulfide bonds link C59/C80 and C90/C124. Positions 146-231 (RLVPRASPPA…GTGPDPDGLD (86 aa)) are disordered. Over residues 186 to 197 (GTPPPQSAPPKE) the composition is skewed to pro residues. The segment covering 198–209 (NPSERKTNEGKR) has biased composition (basic and acidic residues). A disulfide bridge connects residues C241 and C249.

Belongs to the fibroblast growth factor-binding protein family. As to quaternary structure, interacts with FGF2.

It localises to the secreted. Its function is as follows. Heparin-binding protein which binds to FGF2, prevents binding of FGF2 to heparin and probably inhibits immobilization of FGF2 on extracellular matrix glycosaminoglycans, allowing its release and subsequent activation of FGFR signaling which leads to increased vascular permeability. This Homo sapiens (Human) protein is Fibroblast growth factor-binding protein 3 (FGFBP3).